A 30-amino-acid polypeptide reads, in one-letter code: Cyclotide hyen-D (30 aa).

A cross-link (cyclopeptide (Gly-Asn)) is located at residues 1-30 (GFPCGESCVYIPCFTAAIGCSCKSKVCYKN). Cystine bridges form between Cys4/Cys20, Cys8/Cys22, and Cys13/Cys27.

This is a cyclic peptide. As to expression, detected in stems (at protein level).

In terms of biological role, probably participates in a plant defense mechanism. Has strong cytotoxic activity against HUVEC cells (LC(50)= 0.58 uM) and various cancer cells including HeLa (LC(50)= 0.48 uM), MCF-7 and K562. Also displays some hemolytic activity. Binds to and induces leakage in phospholipd membranes, particularly ones containing 1-palmitoyl-2-oleophosphatidylethanolamine (POPE). This Pigea enneasperma (Spade flower) protein is Cyclotide hyen-D.